Reading from the N-terminus, the 312-residue chain is Olfactory receptor 6C76 (312 aa).

Residues 1–23 (MKNRTSVTDFILLGLTDNPQLQV) lie on the Extracellular side of the membrane. The N-linked (GlcNAc...) asparagine glycan is linked to N3. Residues 24–44 (VIFSFLFLTYVLSVTGNLTII) traverse the membrane as a helical segment. Topologically, residues 45-57 (SLTLLDSHLKTPM) are cytoplasmic. The chain crosses the membrane as a helical span at residues 58-80 (YFFLRNFSLEISFTSVCNPRFLI). Residues 81 to 94 (SILTGDKSISYNAC) lie on the Extracellular side of the membrane. C94 and C176 are joined by a disulfide. Residues 95–115 (AAQLFFFIFLGSTEFFLLASM) traverse the membrane as a helical segment. Topologically, residues 116–142 (SYDCYVAICKPLHYTTIMSDRICYQLI) are cytoplasmic. The helical transmembrane segment at 143-163 (ISSWLAGFLVIFPPLAMGLQL) threads the bilayer. Topologically, residues 164 to 195 (DFCDSNVIDHFTCDSAPLLQISCTDTSTLELM) are extracellular. Residues 196–216 (SFILALFTLISTLILVILSYT) form a helical membrane-spanning segment. The Cytoplasmic portion of the chain corresponds to 217–238 (YIIRTILRIPSAQQRKKAFSTC). The chain crosses the membrane as a helical span at residues 239 to 259 (SSHVIVVSISYGSCIFMYVKT). At 260-267 (SAKEGVAL) the chain is on the extracellular side. A helical transmembrane segment spans residues 268–288 (TKGVAILNTSVAPMLNPFIYT). Topologically, residues 289 to 312 (LRNQQVKQAFKDVLRKISHKKKKH) are cytoplasmic.

It belongs to the G-protein coupled receptor 1 family.

Its subcellular location is the cell membrane. Odorant receptor. The sequence is that of Olfactory receptor 6C76 (OR6C76) from Homo sapiens (Human).